The primary structure comprises 643 residues: Threonine--tRNA ligase (643 aa).

The 62-residue stretch at 3–64 folds into the TGS domain; sequence DVVKITFPDG…EEDGAISIIT (62 aa). Residues 245 to 542 are catalytic; the sequence is DHRKLGKELD…LIEEYKGAFP (298 aa). Positions 338, 389, and 519 each coordinate Zn(2+).

This sequence belongs to the class-II aminoacyl-tRNA synthetase family. Homodimer. Zn(2+) is required as a cofactor.

The protein resides in the cytoplasm. The enzyme catalyses tRNA(Thr) + L-threonine + ATP = L-threonyl-tRNA(Thr) + AMP + diphosphate + H(+). Catalyzes the attachment of threonine to tRNA(Thr) in a two-step reaction: L-threonine is first activated by ATP to form Thr-AMP and then transferred to the acceptor end of tRNA(Thr). Also edits incorrectly charged L-seryl-tRNA(Thr). The chain is Threonine--tRNA ligase from Anoxybacillus flavithermus (strain DSM 21510 / WK1).